A 322-amino-acid polypeptide reads, in one-letter code: MTTNTQEINFQQQELKGRDFLTLADYTKDEINYLIDLADYLKKQHKDGVIFEPLKGKTLGMIFEKSSTRTRVSFETGIYQLGGLGIFLSSKDIQIGRGETIADTAKVLSGYLDGIMIRTFAQEDVEELAKHASIPVINGLTDLYHPCQVLADLQTIKEVKGKLHGVKLVYIGDGNNMTHSLMLGAAKTGMHMVAVTPDGYTPNKEVLTKAKSIANQHGAIIEWTSDIATAVQEADVIYTDVWASMGQEEEQQQREKDFENYQVNESLLEKAKTDVIFMHCLPAHRGEEVTAGVIDGKQSVVFQQAENRLHAQKALMTALMAD.

Carbamoyl phosphate is bound by residues 67 to 70, glutamine 94, arginine 118, and 145 to 148; these read STRT and HPCQ. L-ornithine is bound by residues asparagine 176, aspartate 240, and 244–245; that span reads SM. Residues 280–281 and arginine 308 contribute to the carbamoyl phosphate site; that span reads CL.

The protein belongs to the aspartate/ornithine carbamoyltransferase superfamily. OTCase family.

Its subcellular location is the cytoplasm. The catalysed reaction is carbamoyl phosphate + L-ornithine = L-citrulline + phosphate + H(+). Its pathway is amino-acid biosynthesis; L-arginine biosynthesis; L-arginine from L-ornithine and carbamoyl phosphate: step 1/3. In terms of biological role, reversibly catalyzes the transfer of the carbamoyl group from carbamoyl phosphate (CP) to the N(epsilon) atom of ornithine (ORN) to produce L-citrulline. The sequence is that of Ornithine carbamoyltransferase from Oceanobacillus iheyensis (strain DSM 14371 / CIP 107618 / JCM 11309 / KCTC 3954 / HTE831).